A 368-amino-acid chain; its full sequence is 1-deoxy-D-xylulose 5-phosphate reductoisomerase (368 aa).

The NADPH site is built by Thr-7, Gly-8, Ser-9, Ile-10, Gly-31, Lys-32, Asn-33, and Asn-113. 1-deoxy-D-xylulose 5-phosphate is bound at residue Lys-114. Glu-115 is an NADPH binding site. Residue Asp-133 participates in Mn(2+) binding. Ser-134, Glu-135, Ser-158, and His-181 together coordinate 1-deoxy-D-xylulose 5-phosphate. Glu-135 lines the Mn(2+) pocket. Gly-187 is an NADPH binding site. Ser-194, Asn-199, Lys-200, and Glu-203 together coordinate 1-deoxy-D-xylulose 5-phosphate. Glu-203 serves as a coordination point for Mn(2+).

It belongs to the DXR family. Mg(2+) is required as a cofactor. It depends on Mn(2+) as a cofactor.

It carries out the reaction 2-C-methyl-D-erythritol 4-phosphate + NADP(+) = 1-deoxy-D-xylulose 5-phosphate + NADPH + H(+). The protein operates within isoprenoid biosynthesis; isopentenyl diphosphate biosynthesis via DXP pathway; isopentenyl diphosphate from 1-deoxy-D-xylulose 5-phosphate: step 1/6. In terms of biological role, catalyzes the NADPH-dependent rearrangement and reduction of 1-deoxy-D-xylulose-5-phosphate (DXP) to 2-C-methyl-D-erythritol 4-phosphate (MEP). This is 1-deoxy-D-xylulose 5-phosphate reductoisomerase from Helicobacter pylori (strain ATCC 700392 / 26695) (Campylobacter pylori).